The sequence spans 211 residues: MTLTTQFYTMLAMSGMGLWLGASLDTYRLFVIRAKTARWLLFIHDILFWIMQGLLFFYVLLHVNEGEFRIYIFLAVLLGVATYQSLCKRIYIKILKFVIYLVVSVYQFFKKLIQHVLFRPIVWTCGAIIWLAAFLFKKTYSLIGFLLLCLYKIVMVLCFPIRFIAKQCLKLLPVKMRLTFRRYFEKGAGFLKKKKKLLITIRTTITRFLKR.

Helical transmembrane passes span Phe7 to Tyr27, Leu40 to Leu60, Gly66 to Leu86, Ile90 to Lys110, Val116 to Phe136, and Ser141 to Ile161.

Its subcellular location is the forespore outer membrane. Its function is as follows. Required for sporulation. Plays an important role in cortex and coat formation. This Bacillus subtilis (strain 168) protein is Spore protein YabQ (yabQ).